An 85-amino-acid polypeptide reads, in one-letter code: Large ribosomal subunit protein bL27 (85 aa).

The interval 1-22 (MAHKKGQGSSRNGRDSPGQHRG) is disordered.

It belongs to the bacterial ribosomal protein bL27 family.

The protein is Large ribosomal subunit protein bL27 of Anaeromyxobacter sp. (strain Fw109-5).